Reading from the N-terminus, the 132-residue chain is T-cell receptor alpha chain V region 2B4 (132 aa).

The first 20 residues, 1-20 (MKSLSVSLVVLWLLLNWVNS), serve as a signal peptide directing secretion. The tract at residues 21-113 (QQNVQQSPES…SALYLCAVTL (93 aa)) is v segment. Asparagine 42 carries an N-linked (GlcNAc...) asparagine glycan. Positions 114 to 117 (YGGS) are d segment. Positions 118-132 (GNKLIFGTGTLLSVK) are j segment.

In Mus musculus (Mouse), this protein is T-cell receptor alpha chain V region 2B4.